A 389-amino-acid polypeptide reads, in one-letter code: NADH-quinone oxidoreductase subunit D (389 aa).

This sequence belongs to the complex I 49 kDa subunit family. NDH-1 is composed of 14 different subunits. Subunits NuoB, C, D, E, F, and G constitute the peripheral sector of the complex.

The protein resides in the cell inner membrane. The catalysed reaction is a quinone + NADH + 5 H(+)(in) = a quinol + NAD(+) + 4 H(+)(out). In terms of biological role, NDH-1 shuttles electrons from NADH, via FMN and iron-sulfur (Fe-S) centers, to quinones in the respiratory chain. The immediate electron acceptor for the enzyme in this species is believed to be ubiquinone. Couples the redox reaction to proton translocation (for every two electrons transferred, four hydrogen ions are translocated across the cytoplasmic membrane), and thus conserves the redox energy in a proton gradient. In Rickettsia typhi (strain ATCC VR-144 / Wilmington), this protein is NADH-quinone oxidoreductase subunit D.